We begin with the raw amino-acid sequence, 514 residues long: MELAELEQALRRVPGSRGGWELEQLRPEGRGPTTADTPSWSSLGGPKHQEMSFLEQGESRSWPSRAVTTSSERSHGDQGNKASRWTRQEDVEEGGPPGPREGPQSRPVAESTGQEATFPKATPLAQAAPLAEVDNPPTERDILPSDCAASASDSNTDHLDLGIEFSASAASGDELGLVEEKPAPCPSPEVLLPRLGWDDELQKPGAQVYMHFMQEHTCYDAMATSSKLVIFDTMLEIKKAFFALVANGVRAAPLWDSKKQSFVGMLTITDFILVLHRYYRSPLVQIYEIEEHKIETWREIYLQGCFKPLVSISPNDSLFEAVYALIKNRIHRLPVLDPVSGAVLHILTHKRLLKFLHIFGTLLPRPSFLYRTIQDLGIGTFRDLAVVLETAPILTALDIFVDRRVSALPVVNETGQVVGLYSRFDVIHLAAQQTYNHLDMNVGEALRQRTLCLEGVLSCQPHETLGEVIDRIVREQVHRLVLVDETQHLLGVVSLSDILQALVLSPAGIDALGA.

Disordered stretches follow at residues 1–121 (MELA…FPKA) and 134–155 (DNPP…SDSN). Residues 59–71 (SRSWPSRAVTTSS) show a composition bias toward polar residues. CBS domains lie at 222–283 (MATS…RSPL), 305–363 (CFKP…GTLL), and 380–440 (TFRD…HLDM). Residues R250, 265–270 (MLTITD), V310, 331–332 (HR), and K350 each bind ADP. Residues R250, 265 to 270 (MLTITD), V310, H331, 331 to 332 (HR), K350, T380, A385, 406 to 407 (SA), 422 to 425 (SRFD), R449, L457, H478, 478 to 479 (HR), and 494 to 497 (SLSD) each bind AMP. ATP is bound by residues R250, 265-270 (MLTITD), V310, 331-332 (HR), R332, and K350. The short motif at 318 to 339 (LFEAVYALIKNRIHRLPVLDPV) is the AMPK pseudosubstrate element. ADP is bound by residues 422 to 425 (SRFD), R449, L457, and 478 to 479 (HR). ATP-binding positions include 422–425 (SRFD), R449, L457, and 478–479 (HR). Residues 452-511 (CLEGVLSCQPHETLGEVIDRIVREQVHRLVLVDETQHLLGVVSLSDILQALVLSPAGIDA) form the CBS 4 domain.

It belongs to the 5'-AMP-activated protein kinase gamma subunit family. AMPK is a heterotrimer of an alpha catalytic subunit (PRKAA1 or PRKAA2), a beta (PRKAB1 or PRKAB2) and a gamma non-catalytic subunits (PRKAG1, PRKAG2 or PRKAG3). Interacts with FNIP1 and FNIP2. In terms of processing, phosphorylated by ULK1; leading to negatively regulate AMPK activity and suggesting the existence of a regulatory feedback loop between ULK1 and AMPK. Post-translationally, glycosylated; O-GlcNAcylated by OGT, promoting the AMP-activated protein kinase (AMPK) activity. As to expression, muscle.

AMP/ATP-binding subunit of AMP-activated protein kinase (AMPK), an energy sensor protein kinase that plays a key role in regulating cellular energy metabolism. In response to reduction of intracellular ATP levels, AMPK activates energy-producing pathways and inhibits energy-consuming processes: inhibits protein, carbohydrate and lipid biosynthesis, as well as cell growth and proliferation. AMPK acts via direct phosphorylation of metabolic enzymes, and by longer-term effects via phosphorylation of transcription regulators. AMPK also acts as a regulator of cellular polarity by remodeling the actin cytoskeleton; probably by indirectly activating myosin. The AMPK gamma3 subunit is a non-catalytic subunit with a regulatory role in muscle energy metabolism. It mediates binding to AMP, ADP and ATP, leading to AMPK activation or inhibition: AMP-binding results in allosteric activation of alpha catalytic subunit (PRKAA1 or PRKAA2) both by inducing phosphorylation and preventing dephosphorylation of catalytic subunits. ADP also stimulates phosphorylation, without stimulating already phosphorylated catalytic subunit. ATP promotes dephosphorylation of catalytic subunit, rendering the AMPK enzyme inactive. The sequence is that of 5'-AMP-activated protein kinase subunit gamma-3 (PRKAG3) from Sus scrofa (Pig).